The chain runs to 273 residues: Type II restriction enzyme HgiCII (273 aa).

Belongs to the TdeIII type II restriction endonuclease family.

It catalyses the reaction Endonucleolytic cleavage of DNA to give specific double-stranded fragments with terminal 5'-phosphates.. In terms of biological role, a P subtype restriction enzyme that recognizes the double-stranded sequence 5'-GGWCC-3' and cleaves after G-1. The sequence is that of Type II restriction enzyme HgiCII from Herpetosiphon aurantiacus (Herpetosiphon giganteus).